A 324-amino-acid chain; its full sequence is Phospho-N-acetylmuramoyl-pentapeptide-transferase (324 aa).

Transmembrane regions (helical) follow at residues 5-25 (GLLV…PLFI), 52-72 (PTMG…IMAI), 77-97 (LGAE…IGFL), 122-142 (VIAI…YIMI), 149-169 (FELG…GSNA), 176-196 (LDGL…IIAV), 201-221 (FGVA…LVFN), 227-247 (VFMG…VAIL), 253-273 (LLVI…IQVI), and 302-322 (VVVT…YIGV).

This sequence belongs to the glycosyltransferase 4 family. MraY subfamily. Requires Mg(2+) as cofactor.

The protein localises to the cell membrane. It catalyses the reaction UDP-N-acetyl-alpha-D-muramoyl-L-alanyl-gamma-D-glutamyl-meso-2,6-diaminopimeloyl-D-alanyl-D-alanine + di-trans,octa-cis-undecaprenyl phosphate = di-trans,octa-cis-undecaprenyl diphospho-N-acetyl-alpha-D-muramoyl-L-alanyl-D-glutamyl-meso-2,6-diaminopimeloyl-D-alanyl-D-alanine + UMP. Its pathway is cell wall biogenesis; peptidoglycan biosynthesis. Catalyzes the initial step of the lipid cycle reactions in the biosynthesis of the cell wall peptidoglycan: transfers peptidoglycan precursor phospho-MurNAc-pentapeptide from UDP-MurNAc-pentapeptide onto the lipid carrier undecaprenyl phosphate, yielding undecaprenyl-pyrophosphoryl-MurNAc-pentapeptide, known as lipid I. The polypeptide is Phospho-N-acetylmuramoyl-pentapeptide-transferase (Bacillus mycoides (strain KBAB4) (Bacillus weihenstephanensis)).